Here is a 1009-residue protein sequence, read N- to C-terminus: Glutamate receptor ionotropic, delta-1 (1009 aa).

The signal sequence occupies residues 1–20; the sequence is MEALTLWLLPWICQCVSVRA. Residues 21-436 are interaction with CBLN1; that stretch reads DSIIHIGAIF…ERPMGSRLQG (416 aa). The Extracellular portion of the chain corresponds to 21–562; that stretch reads DSIIHIGAIF…SIFSLFAPFD (542 aa). 3 disulfide bridges follow: C80-C351, C96-C128, and C294-C306. 2 N-linked (GlcNAc...) asparagine glycosylation sites follow: N131 and N200. N-linked (GlcNAc...) asparagine glycans are attached at residues N422 and N498. Residues E527, V530, and D531 each coordinate Ca(2+). The helical transmembrane segment at 563-583 threads the bilayer; sequence FAVWACIAAAIPVVGVLIFVL. Residues 584 to 637 lie on the Cytoplasmic side of the membrane; the sequence is NRIQAVRAQSAAQPRPSASATLHSAIWIVYGAFVQQGGESSVNSMAMRIVMGSW. Residues 638–658 traverse the membrane as a helical segment; the sequence is WLFTLIVCSSYTANLAAFLTV. Residues 659–830 are Extracellular-facing; that stretch reads SRMDNPIRTF…ADGKSLKLHS (172 aa). Ca(2+)-binding residues include D753, D755, and S757. Residues 831–851 form a helical membrane-spanning segment; the sequence is FAGVFCILAIGLLLACLVAAL. Residues 852 to 1009 are Cytoplasmic-facing; it reads ELWWNSNRCH…ALDTSHGTSI (158 aa). The span at 930 to 942 shows a compositional bias: polar residues; that stretch reads FLPEQSSHGTSRT. The interval 930–954 is disordered; the sequence is FLPEQSSHGTSRTLSSGPSSNLPLP. Low complexity predominate over residues 943–954; sequence LSSGPSSNLPLP.

The protein belongs to the glutamate-gated ion channel (TC 1.A.10.1) family. GRID1 subfamily. As to quaternary structure, homodimer. Interacts (via extracellular N-terminal domain) with CBLN1 (via C1q domain), and more weakly with CBLN2; the interactions mediate the trans-synaptic adhesion complexes also with neurexins and are required for ligand-gated cation channel activity.

The protein resides in the postsynaptic cell membrane. The catalysed reaction is Ca(2+)(in) = Ca(2+)(out). It catalyses the reaction Na(+)(in) = Na(+)(out). In terms of biological role, member of the ionotropic glutamate receptor family, which plays a crucial role in synaptic organization and signal transduction in the central nervous system. Although it shares structural features with ionotropic glutamate receptors, does not bind glutamate as a primary ligand. Instead, forms trans-synaptic adhesion complexes with presynaptic neurexins and cerebellins, regulating NMDA and AMPA receptor activity and influencing synaptic plasticity through signal transduction. In the presence of neurexins and cerebellins, forms cation-selective channels that are proposed to be gated by glycine and D-serine. However, recent research disputes this ligand-gated cation channel activity. Cation-selective ion channel can be triggered by GRM1 in dopaminergic neurons. Also acts as a receptor for GABA, modulating inhibitory synaptic plasticity through non-ionotropic mechanisms. In Homo sapiens (Human), this protein is Glutamate receptor ionotropic, delta-1.